Consider the following 286-residue polypeptide: MSYNESSQIKYWMFNNEGLKKLREQCNNQHKQVILEKTPSSEPNILSPDDELSLIHYYETKTLEIAMALNLPDKVSAPAIIYIKRFYLKNSIMQYGAKLVMLSCLFIACKTEDNHLDIDYYSNITKASPSDITNLEIIILESLNFNLIVYHPFRPMYGYILDINDNSAIYNNTNGVSPIKFDTLWETCKKSIQKSLFSDCCFEFHPQIIALACLNLNWDGFNMYCINNNNNNNNNNNNNNNNNNNNNNNNNNNNNNNNNNNNNNNNNNNNNNNNNNNNNNNNNLLL.

One can recognise a Cyclin N-terminal domain in the interval 79–148; that stretch reads AIIYIKRFYL…ILESLNFNLI (70 aa). The segment at 235-286 is disordered; that stretch reads NNNNNNNNNNNNNNNNNNNNNNNNNNNNNNNNNNNNNNNNNNNNNNNNNLLL.

Belongs to the cyclin family. Cyclin C subfamily.

The protein resides in the nucleus. May regulate cdk7 involved in transcription regulation and cell cycle progression. This chain is Putative cyclin-H (cycH), found in Dictyostelium discoideum (Social amoeba).